We begin with the raw amino-acid sequence, 287 residues long: S-methyl-5'-thioadenosine phosphorylase (287 aa).

Phosphate-binding positions include threonine 13 and 55 to 56; that span reads RH. Methionine 186 contacts substrate. Position 187 (threonine 187) interacts with phosphate. 210–212 contributes to the substrate binding site; it reads DYD.

The protein belongs to the PNP/MTAP phosphorylase family. MTAP subfamily. As to quaternary structure, homohexamer. Dimer of a homotrimer.

The enzyme catalyses S-methyl-5'-thioadenosine + phosphate = 5-(methylsulfanyl)-alpha-D-ribose 1-phosphate + adenine. The protein operates within amino-acid biosynthesis; L-methionine biosynthesis via salvage pathway; S-methyl-5-thio-alpha-D-ribose 1-phosphate from S-methyl-5'-thioadenosine (phosphorylase route): step 1/1. In terms of biological role, catalyzes the reversible phosphorylation of S-methyl-5'-thioadenosine (MTA) to adenine and 5-methylthioribose-1-phosphate. Involved in the breakdown of MTA, a major by-product of polyamine biosynthesis. Responsible for the first step in the methionine salvage pathway after MTA has been generated from S-adenosylmethionine. Has broad substrate specificity with 6-aminopurine nucleosides as preferred substrates. In Leptospira interrogans serogroup Icterohaemorrhagiae serovar Lai (strain 56601), this protein is S-methyl-5'-thioadenosine phosphorylase.